The following is a 324-amino-acid chain: Delta-aminolevulinic acid dehydratase (324 aa).

3 residues coordinate Zn(2+): Cys-118, Cys-120, and Cys-128. Catalysis depends on Lys-195, which acts as the Schiff-base intermediate with substrate. The 5-aminolevulinate site is built by Arg-205 and Arg-217. Mg(2+) is bound at residue Glu-233. Lys-248 (schiff-base intermediate with substrate) is an active-site residue. 2 residues coordinate 5-aminolevulinate: Ser-274 and Tyr-313.

Belongs to the ALAD family. Homooctamer. The cofactor is Zn(2+).

The enzyme catalyses 2 5-aminolevulinate = porphobilinogen + 2 H2O + H(+). It functions in the pathway porphyrin-containing compound metabolism; protoporphyrin-IX biosynthesis; coproporphyrinogen-III from 5-aminolevulinate: step 1/4. Catalyzes an early step in the biosynthesis of tetrapyrroles. Binds two molecules of 5-aminolevulinate per subunit, each at a distinct site, and catalyzes their condensation to form porphobilinogen. The polypeptide is Delta-aminolevulinic acid dehydratase (hemB) (Staphylococcus aureus (strain NCTC 8325 / PS 47)).